The following is a 671-amino-acid chain: MSSVDVLLTVGKLDASLALLTTQDHHVIEFPTVLLPENVKAGSIIKMQVSQNLEEEKKQRNHFKSIQAKILEKYGTHKPESPVLKIVNVTQTSCVLAWDPLKLGSAKLKSLILYRKGIRSMVIPNPFKVTTTKISGLSVDTPYEFQLKLITTSGTLWSEKVILRTHKMTDMSGITVCLGPLDPLKEISDLQISQCLSHIGARPLQRHVAIDTTHFVCNDLDNEESNEELIRAKHNNIPIVRPEWVRACEVEKRIVGVRGFYLDADQSILKNYTFPPVNEEELSYSKENEPVAEVADENKMPEDTTDVEQVASPNDNESNPSEAKEQGEKSGHETAPVSPVEDPLHASTALENETTIETVNPSVRSLKSEPVGTPNIEENKADSSAEAVVEEPNEAVAESSPNEEATGQKSEDTDTHSNEQADNGFVQTEEVAENNITTESAGENNEPADDAAMEFGRPEAEIETPEVNESIEDANEPAEDSNEPVEDSNKPVKDSNKPVEDSNKPVEDSNKPVEDSNKPVEDANEPVEDTSEPVEDAGEPVQETNEFTTDIASPRHQEEDIELEAEPKDATESVAVEPSNEDVKPEEKGSEAEDDINNVSKEAASGESTTHQKTEASASLESSAVTEEQETTEAEVNTDDVLSTKEAKKNTGNSNSNKKKNKKNKKKGKKK.

The Fibronectin type-III domain occupies Lys-78–Met-168. A BRCT domain is found at His-166–Leu-262. The tract at residues Glu-280–Lys-671 is disordered. At Thr-305 the chain carries Phosphothreonine. A compositionally biased stretch (polar residues) spans Ala-311–Ser-321. Basic and acidic residues predominate over residues Glu-322 to His-332. Residues Ser-338, Ser-362, Ser-365, Ser-383, and Ser-384 each carry the phosphoserine modification. Residues Ala-349–Ser-365 show a composition bias toward polar residues. The span at Lys-409–Glu-419 shows a compositional bias: basic and acidic residues. The span at Asn-434–Glu-443 shows a compositional bias: polar residues. Residues Glu-461 to Glu-486 show a composition bias toward acidic residues. Basic and acidic residues predominate over residues Asp-487–Glu-521. Residues Asp-522–Gly-538 are compositionally biased toward acidic residues. Polar residues predominate over residues Gln-542–Ile-551. Ser-573 and Ser-579 each carry phosphoserine. Positions Glu-581–Glu-591 are enriched in basic and acidic residues. Residue Lys-584 forms a Glycyl lysine isopeptide (Lys-Gly) (interchain with G-Cter in ubiquitin) linkage. Phosphoserine is present on Ser-590. A compositionally biased stretch (polar residues) spans Gly-606–Leu-620. Acidic residues predominate over residues Glu-627–Thr-638. Residues Asn-657–Lys-671 are compositionally biased toward basic residues.

The protein belongs to the CHS5 family. Component of the CHS5/6 complex composed of the 4 CHAPS proteins BCH1, BCH2, BUD7, and CHS6 as well as at least CHS5 and GTP-bound ARF1. The complex interacts with the cargo protein CHS3.

Its subcellular location is the golgi apparatus. It localises to the trans-Golgi network membrane. Its function is as follows. Component of the CHS5/6 complex which mediates export of specific cargo proteins, including chitin synthase CHS3. Also involved in targeting FUS1 to sites of polarized growth. This chain is Chitin biosynthesis protein CHS5 (CHS5), found in Saccharomyces cerevisiae (strain ATCC 204508 / S288c) (Baker's yeast).